A 476-amino-acid chain; its full sequence is Aspartyl/glutamyl-tRNA(Asn/Gln) amidotransferase subunit B (476 aa).

Belongs to the GatB/GatE family. GatB subfamily. In terms of assembly, heterotrimer of A, B and C subunits.

It catalyses the reaction L-glutamyl-tRNA(Gln) + L-glutamine + ATP + H2O = L-glutaminyl-tRNA(Gln) + L-glutamate + ADP + phosphate + H(+). It carries out the reaction L-aspartyl-tRNA(Asn) + L-glutamine + ATP + H2O = L-asparaginyl-tRNA(Asn) + L-glutamate + ADP + phosphate + 2 H(+). Functionally, allows the formation of correctly charged Asn-tRNA(Asn) or Gln-tRNA(Gln) through the transamidation of misacylated Asp-tRNA(Asn) or Glu-tRNA(Gln) in organisms which lack either or both of asparaginyl-tRNA or glutaminyl-tRNA synthetases. The reaction takes place in the presence of glutamine and ATP through an activated phospho-Asp-tRNA(Asn) or phospho-Glu-tRNA(Gln). The polypeptide is Aspartyl/glutamyl-tRNA(Asn/Gln) amidotransferase subunit B (Geobacillus kaustophilus (strain HTA426)).